A 369-amino-acid polypeptide reads, in one-letter code: Chaperone protein DnaJ (369 aa).

The 65-residue stretch at 5–69 folds into the J domain; sequence DYYDVLGISK…NKKAQYDRFG (65 aa). The CR-type zinc-finger motif lies at 131 to 213; it reads GTTKNVSVDI…CSGAGRVKAK (83 aa). Cys144, Cys147, Cys161, Cys164, Cys187, Cys190, Cys201, and Cys204 together coordinate Zn(2+). CXXCXGXG motif repeat units follow at residues 144–151, 161–168, 187–194, and 201–208; these read CGHCHGSG, CSKCHGQG, CPQCQGEG, and CHVCSGAG.

Belongs to the DnaJ family. Homodimer. It depends on Zn(2+) as a cofactor.

It is found in the cytoplasm. Its function is as follows. Participates actively in the response to hyperosmotic and heat shock by preventing the aggregation of stress-denatured proteins and by disaggregating proteins, also in an autonomous, DnaK-independent fashion. Unfolded proteins bind initially to DnaJ; upon interaction with the DnaJ-bound protein, DnaK hydrolyzes its bound ATP, resulting in the formation of a stable complex. GrpE releases ADP from DnaK; ATP binding to DnaK triggers the release of the substrate protein, thus completing the reaction cycle. Several rounds of ATP-dependent interactions between DnaJ, DnaK and GrpE are required for fully efficient folding. Also involved, together with DnaK and GrpE, in the DNA replication of plasmids through activation of initiation proteins. This Acholeplasma laidlawii protein is Chaperone protein DnaJ.